A 154-amino-acid chain; its full sequence is SsrA-binding protein (154 aa).

Positions 132–154 (KRESIKKRQDKRDMERALKRGAE) are disordered.

It belongs to the SmpB family.

Its subcellular location is the cytoplasm. In terms of biological role, required for rescue of stalled ribosomes mediated by trans-translation. Binds to transfer-messenger RNA (tmRNA), required for stable association of tmRNA with ribosomes. tmRNA and SmpB together mimic tRNA shape, replacing the anticodon stem-loop with SmpB. tmRNA is encoded by the ssrA gene; the 2 termini fold to resemble tRNA(Ala) and it encodes a 'tag peptide', a short internal open reading frame. During trans-translation Ala-aminoacylated tmRNA acts like a tRNA, entering the A-site of stalled ribosomes, displacing the stalled mRNA. The ribosome then switches to translate the ORF on the tmRNA; the nascent peptide is terminated with the 'tag peptide' encoded by the tmRNA and targeted for degradation. The ribosome is freed to recommence translation, which seems to be the essential function of trans-translation. The chain is SsrA-binding protein from Acaryochloris marina (strain MBIC 11017).